We begin with the raw amino-acid sequence, 688 residues long: Chaperone protein dnaK1 (688 aa).

Position 198 is a phosphothreonine; by autocatalysis (threonine 198). Basic and acidic residues predominate over residues 630–661; the sequence is DLPRDSYRERDAYNNRDYGRDYGRDYGRDSRP. The interval 630 to 688 is disordered; the sequence is DLPRDSYRERDAYNNRDYGRDYGRDYGRDSRPSYDNSRPPRKSPRPSYQDNWDDDDDWL.

This sequence belongs to the heat shock protein 70 family.

Functionally, acts as a chaperone. This Nostoc sp. (strain PCC 7120 / SAG 25.82 / UTEX 2576) protein is Chaperone protein dnaK1 (dnaK1).